A 75-amino-acid chain; its full sequence is Small ribosomal subunit protein bS18c (75 aa).

It belongs to the bacterial ribosomal protein bS18 family. As to quaternary structure, part of the 30S ribosomal subunit.

It is found in the plastid. The protein resides in the chloroplast. This Angiopteris evecta (Mule's foot fern) protein is Small ribosomal subunit protein bS18c.